The chain runs to 156 residues: Histone acetyltransferase HPA2 (156 aa).

The region spanning 9–156 is the N-acetyltransferase domain; sequence ITVRFVTEND…PKILYKRKGY (148 aa). An acetyl-CoA-binding site is contributed by 93 to 106; sequence LYVDENSRVKGAGG.

The protein belongs to the acetyltransferase family. GNAT subfamily. Forms homodimers in the absence, and homotetramers in the presence of acetyl-CoA. Post-translationally, autoacetylates in an intermolecular reaction.

The catalysed reaction is L-lysyl-[protein] + acetyl-CoA = N(6)-acetyl-L-lysyl-[protein] + CoA + H(+). Functionally, N-acetyltransferase that acetylates histone H3 at 'Lys-14' and histone H4 at 'Lys-5' and 'Lys-12'. Also acetylates polyamines like putrescine, spermidine and spermine, and certain other small basic proteins like nuclear HMG proteins. The polypeptide is Histone acetyltransferase HPA2 (Saccharomyces cerevisiae (strain ATCC 204508 / S288c) (Baker's yeast)).